Reading from the N-terminus, the 100-residue chain is Small ribosomal subunit protein uS14 (100 aa).

This sequence belongs to the universal ribosomal protein uS14 family. Part of the 30S ribosomal subunit. Contacts proteins S3 and S10.

In terms of biological role, binds 16S rRNA, required for the assembly of 30S particles and may also be responsible for determining the conformation of the 16S rRNA at the A site. The protein is Small ribosomal subunit protein uS14 of Acaryochloris marina (strain MBIC 11017).